Reading from the N-terminus, the 962-residue chain is Nonribosomal peptide synthetase atqA (962 aa).

The tract at residues 34 to 462 (AANTTEGIIA…DGRTKEMVNI (429 aa)) is adenylation (A) domain. One can recognise a Carrier domain in the interval 595-672 (SAEEATILSI…GLCQRIAATS (78 aa)). Residue Ser630 is modified to O-(pantetheine 4'-phosphoryl)serine. A thioesterase (TE) domain region spans residues 694–951 (PLWLVHPGVG…KPEYVANFAK (258 aa)).

The protein belongs to the NRP synthetase family.

The protein operates within secondary metabolite biosynthesis. Its function is as follows. Nonribosomal peptide synthetase; part of the gene cluster that mediates the biosynthesis of asterriquinone CT5, a natural product that displays potential biological activities including antitumor and insulin mimic activities. The nonribosomal peptide synthetase atqA is responsible for the production of the benzoquinone derivative didemethylasterriquinone D (DDAQ D), via condensation of 2 indole pyruvic acid (IPA) molecules. The symmetric connectivity of the 2 IPA molecules is thought to arise by head-to-tail dual Claisen condensations catalyzed by the TE domain of atqA. DDAQ D represents the core structure of asterriquinones and is further modified by yet unidentified tailoring enzymes to lead to the production of asterriquinone CT5. The sequence is that of Nonribosomal peptide synthetase atqA from Aspergillus terreus (strain NIH 2624 / FGSC A1156).